Consider the following 338-residue polypeptide: Fructose-1,6-bisphosphatase class 1 1 (338 aa).

Mg(2+)-binding residues include E94, D116, L118, and D119. Residues 119 to 122 (DGSS), N210, and K276 each bind substrate. E282 contacts Mg(2+).

Belongs to the FBPase class 1 family. In terms of assembly, homotetramer. The cofactor is Mg(2+).

Its subcellular location is the cytoplasm. It catalyses the reaction beta-D-fructose 1,6-bisphosphate + H2O = beta-D-fructose 6-phosphate + phosphate. Its pathway is carbohydrate biosynthesis; gluconeogenesis. The chain is Fructose-1,6-bisphosphatase class 1 1 from Paraburkholderia xenovorans (strain LB400).